The sequence spans 120 residues: A-type ATP synthase subunit F (120 aa).

This sequence belongs to the V-ATPase F subunit family. In terms of assembly, has multiple subunits with at least A(3), B(3), C, D, E, F, H, I and proteolipid K(x).

It is found in the cell membrane. In terms of biological role, component of the A-type ATP synthase that produces ATP from ADP in the presence of a proton gradient across the membrane. The protein is A-type ATP synthase subunit F of Halobacterium salinarum (strain ATCC 29341 / DSM 671 / R1).